A 24-amino-acid polypeptide reads, in one-letter code: Calcium-binding shell glycoprotein P50 (24 aa).

The tract at residues 1–24 (KDALEHTGFAPKKDGEEHVEWNYN) is disordered.

In terms of processing, glycosylated. In terms of tissue distribution, nacreous and prismatic layers of the shell.

Calcium-binding. The polypeptide is Calcium-binding shell glycoprotein P50 (Unio pictorum (Painter's mussel)).